Consider the following 359-residue polypeptide: Peptide chain release factor 1 (359 aa).

Residue Gln-234 is modified to N5-methylglutamine.

This sequence belongs to the prokaryotic/mitochondrial release factor family. In terms of processing, methylated by PrmC. Methylation increases the termination efficiency of RF1.

It localises to the cytoplasm. In terms of biological role, peptide chain release factor 1 directs the termination of translation in response to the peptide chain termination codons UAG and UAA. This chain is Peptide chain release factor 1, found in Clavibacter michiganensis subsp. michiganensis (strain NCPPB 382).